The sequence spans 502 residues: Lysine--tRNA ligase (502 aa).

The Mg(2+) site is built by E412 and E419.

Belongs to the class-II aminoacyl-tRNA synthetase family. In terms of assembly, homodimer. Mg(2+) is required as a cofactor.

Its subcellular location is the cytoplasm. The enzyme catalyses tRNA(Lys) + L-lysine + ATP = L-lysyl-tRNA(Lys) + AMP + diphosphate. The protein is Lysine--tRNA ligase of Nitrosomonas europaea (strain ATCC 19718 / CIP 103999 / KCTC 2705 / NBRC 14298).